A 396-amino-acid chain; its full sequence is Flavohemoprotein (396 aa).

In terms of domain architecture, Globin spans 1–136; it reads MLDAQTIATV…LANVFINREA (136 aa). His85 provides a ligand contact to heme b. Residues Tyr95 and Glu135 each act as charge relay system in the active site. The segment at 147-396 is reductase; it reads GGWEGTRDFR…YECFGPHKVL (250 aa). Residues 150–255 form the FAD-binding FR-type domain; it reads EGTRDFRIVA…VAPAGDFFMA (106 aa). Residues Tyr188 and 204–207 contribute to the FAD site; that span reads RQYS. 268-273 serves as a coordination point for NADP(+); sequence GVGQTP. FAD is bound at residue 389-392; sequence CFGP.

The protein belongs to the globin family. Two-domain flavohemoproteins subfamily. It in the C-terminal section; belongs to the flavoprotein pyridine nucleotide cytochrome reductase family. Heme b is required as a cofactor. It depends on FAD as a cofactor.

It carries out the reaction 2 nitric oxide + NADPH + 2 O2 = 2 nitrate + NADP(+) + H(+). The catalysed reaction is 2 nitric oxide + NADH + 2 O2 = 2 nitrate + NAD(+) + H(+). Its function is as follows. Is involved in NO detoxification in an aerobic process, termed nitric oxide dioxygenase (NOD) reaction that utilizes O(2) and NAD(P)H to convert NO to nitrate, which protects the bacterium from various noxious nitrogen compounds. Therefore, plays a central role in the inducible response to nitrosative stress. The polypeptide is Flavohemoprotein (Escherichia coli O6:H1 (strain CFT073 / ATCC 700928 / UPEC)).